The following is a 65-amino-acid chain: Large ribosomal subunit protein bL33c (65 aa).

This sequence belongs to the bacterial ribosomal protein bL33 family.

Its subcellular location is the plastid. The protein localises to the chloroplast. In Pyropia yezoensis (Susabi-nori), this protein is Large ribosomal subunit protein bL33c.